The primary structure comprises 1370 residues: DNA-directed RNA polymerase subunit beta (1370 aa).

This sequence belongs to the RNA polymerase beta chain family. In terms of assembly, the RNAP catalytic core consists of 2 alpha, 1 beta, 1 beta' and 1 omega subunit. When a sigma factor is associated with the core the holoenzyme is formed, which can initiate transcription.

The enzyme catalyses RNA(n) + a ribonucleoside 5'-triphosphate = RNA(n+1) + diphosphate. DNA-dependent RNA polymerase catalyzes the transcription of DNA into RNA using the four ribonucleoside triphosphates as substrates. The polypeptide is DNA-directed RNA polymerase subunit beta (Geobacter metallireducens (strain ATCC 53774 / DSM 7210 / GS-15)).